We begin with the raw amino-acid sequence, 421 residues long: MAESWLRLSGAGPAEEAGPEGGLEEPDALDDSLTSLQWLQEFSILNAKAPALPPGGTDPHGYHQVPGSAAPGSPLAADPACLGQPHTPGKPTSSCTSRSAPPGLQAPPPDDVDYATNPHVKPPYSYATLICMAMQASKATKITLSAIYKWITDNFCYFRHADPTWQNSIRHNLSLNKCFIKVPREKDEPGKGGFWRIDPQYAERLLSGAFKKRRLPPVHIHPAFARQAAQEPSAVPRAGPLTVNTEAQQLLREFEEATGEAGWGAGEGRLGHKRKQPLPKRVAKVPRPPSTLLPTPEEQGELEPLKGNFDWEAIFDAGTLGGELGALEALELSPPLSPASHVDVDLTIHGRHIDCPATWGPSVEQAADSLDFDETFLATSFLQHPWDESGSGCLPPEPLFEAGDATLASDLQDWASVGAFL.

Disordered regions lie at residues 1-34 and 48-116; these read MAES…DSLT and KAPA…DYAT. Positions 66–80 are enriched in low complexity; the sequence is PGSAAPGSPLAADPA. Over residues 90–99 the composition is skewed to polar residues; the sequence is KPTSSCTSRS. The segment at residues 120 to 210 is a DNA-binding region (fork-head); sequence VKPPYSYATL…YAERLLSGAF (91 aa). The interval 261 to 302 is disordered; it reads AGWGAGEGRLGHKRKQPLPKRVAKVPRPPSTLLPTPEEQGEL. Over residues 271–284 the composition is skewed to basic residues; sequence GHKRKQPLPKRVAK.

This sequence belongs to the FOXJ1 family. As to expression, testis, oviduct, lung and brain cortex.

The protein resides in the nucleus. Its function is as follows. Transcription factor specifically required for the formation of motile cilia. Acts by activating transcription of genes that mediate assembly of motile cilia, such as CFAP157. Binds the DNA consensus sequences 5'-HWDTGTTTGTTTA-3' or 5'-KTTTGTTGTTKTW-3' (where H is not G, W is A or T, D is not C, and K is G or T). Activates the transcription of a variety of ciliary proteins in the developing brain and lung. The protein is Forkhead box protein J1 of Homo sapiens (Human).